Here is a 430-residue protein sequence, read N- to C-terminus: Serine--tRNA ligase (430 aa).

Position 237–239 (T237–E239) interacts with L-serine. Position 268-270 (R268–E270) interacts with ATP. L-serine is bound at residue E291. ATP is bound at residue E355 to S358. Position 391 (S391) interacts with L-serine.

This sequence belongs to the class-II aminoacyl-tRNA synthetase family. Type-1 seryl-tRNA synthetase subfamily. In terms of assembly, homodimer. The tRNA molecule binds across the dimer.

The protein localises to the cytoplasm. It carries out the reaction tRNA(Ser) + L-serine + ATP = L-seryl-tRNA(Ser) + AMP + diphosphate + H(+). The enzyme catalyses tRNA(Sec) + L-serine + ATP = L-seryl-tRNA(Sec) + AMP + diphosphate + H(+). It functions in the pathway aminoacyl-tRNA biosynthesis; selenocysteinyl-tRNA(Sec) biosynthesis; L-seryl-tRNA(Sec) from L-serine and tRNA(Sec): step 1/1. Functionally, catalyzes the attachment of serine to tRNA(Ser). Is also able to aminoacylate tRNA(Sec) with serine, to form the misacylated tRNA L-seryl-tRNA(Sec), which will be further converted into selenocysteinyl-tRNA(Sec). The protein is Serine--tRNA ligase of Serratia proteamaculans (strain 568).